A 316-amino-acid chain; its full sequence is NAD kinase 1 (316 aa).

Catalysis depends on aspartate 67, which acts as the Proton acceptor. An NAD(+)-binding site is contributed by 67-68 (DG). The tract at residues 132–151 (RSAEERADAPTPLQQPDVED) is disordered. Residues 160-161 (ND), arginine 190, and aspartate 192 each bind NAD(+).

It belongs to the NAD kinase family. The cofactor is a divalent metal cation.

The protein resides in the cytoplasm. The enzyme catalyses NAD(+) + ATP = ADP + NADP(+) + H(+). Functionally, involved in the regulation of the intracellular balance of NAD and NADP, and is a key enzyme in the biosynthesis of NADP. Catalyzes specifically the phosphorylation on 2'-hydroxyl of the adenosine moiety of NAD to yield NADP. In Parasynechococcus marenigrum (strain WH8102), this protein is NAD kinase 1.